The chain runs to 339 residues: DNA double-strand break repair nuclease NurA (339 aa).

2 residues coordinate Mn(2+): Asp58 and Asp133.

It belongs to the NurA family. In terms of assembly, homodimer. Forms a complex with HerA. Mn(2+) serves as cofactor.

With respect to regulation, nuclease activity requires the presence of HerA. Another report shows endo- and exonuclease activity in the absence of HerA; HerA stimulates the exo- but not endonuclease. LhrC-Core (Hel112) inhibits the exonuclease activity of the HerA-NurA complex on ss- and dsDNA, has no effect on the nicking activity of NurA. Endo- and exonuclease activities are inhibited by ATP; ATP may subtract divalent ions from the reaction preventing nuclease activity, HerA can alleviate ATP inhibition. Involved in DNA double-strand break (DSB) repair. Probably acts with HerA to stimulate resection of the 5' strand and produce the long 3' single-strand that is required for RadA loading. NurA and HerA together stimulate the end-resection of six nucleotides of a linear DNA substrate. Processes linear double-stranded (ds)DNA probes with 3' or 5' single-stranded overhangs or blunt ends. Has endonuclease activity on single-stranded (ss)DNA and nicking activity on dsDNA without HerA as well as 5'- and 3'-exonuclease activity on ssDNA. Binds ssDNA, dsDNA, forked and bubble DNA equally well. The chain is DNA double-strand break repair nuclease NurA from Saccharolobus solfataricus (strain ATCC 35092 / DSM 1617 / JCM 11322 / P2) (Sulfolobus solfataricus).